The sequence spans 433 residues: Serine hydroxymethyltransferase (433 aa).

Residues Leu-132 and 136-138 (GHL) contribute to the (6S)-5,6,7,8-tetrahydrofolate site. At Lys-241 the chain carries N6-(pyridoxal phosphate)lysine.

The protein belongs to the SHMT family. Homodimer. The cofactor is pyridoxal 5'-phosphate.

The protein resides in the cytoplasm. The enzyme catalyses (6R)-5,10-methylene-5,6,7,8-tetrahydrofolate + glycine + H2O = (6S)-5,6,7,8-tetrahydrofolate + L-serine. Its pathway is one-carbon metabolism; tetrahydrofolate interconversion. The protein operates within amino-acid biosynthesis; glycine biosynthesis; glycine from L-serine: step 1/1. Functionally, catalyzes the reversible interconversion of serine and glycine with tetrahydrofolate (THF) serving as the one-carbon carrier. This reaction serves as the major source of one-carbon groups required for the biosynthesis of purines, thymidylate, methionine, and other important biomolecules. Also exhibits THF-independent aldolase activity toward beta-hydroxyamino acids, producing glycine and aldehydes, via a retro-aldol mechanism. The polypeptide is Serine hydroxymethyltransferase (Nitrobacter winogradskyi (strain ATCC 25391 / DSM 10237 / CIP 104748 / NCIMB 11846 / Nb-255)).